Here is a 345-residue protein sequence, read N- to C-terminus: RING finger protein 228 (345 aa).

Residues 1 to 21 (MAAPASDSGGSQQSPSSSPGS) show a composition bias toward low complexity. A disordered region spans residues 1 to 43 (MAAPASDSGGSQQSPSSSPGSREGAGVAAKGAPDCGDAGARDA). The RING-type zinc-finger motif lies at 58–125 (CKICYNYFDA…PGAIACPVCR (68 aa)). A disordered region spans residues 159–213 (LPQDRLPPLPARLPAPAAAPPPTPAPPPPPSPAPPQPPPPPPAEDAAPGPRARPG). Over residues 163–201 (RLPPLPARLPAPAAAPPPTPAPPPPPSPAPPQPPPPPPA) the composition is skewed to pro residues. Over residues 202-213 (EDAAPGPRARPG) the composition is skewed to low complexity. A run of 2 helical transmembrane segments spans residues 236–256 (VCVV…LIFV) and 290–310 (LSVA…ICWL). Positions 319-345 (AGSTGGSGGGGGPRARAAAGGARRSDT) are disordered. The segment covering 321-331 (STGGSGGGGGP) has biased composition (gly residues). Over residues 332–345 (RARAAAGGARRSDT) the composition is skewed to low complexity.

The protein resides in the membrane. This Homo sapiens (Human) protein is RING finger protein 228.